The chain runs to 429 residues: Adenylosuccinate synthetase (429 aa).

Residues 12 to 18 and 40 to 42 each bind GTP; these read GDEGKGK and GHT. Residue Asp13 is the Proton acceptor of the active site. Residues Asp13 and Gly40 each coordinate Mg(2+). Residues 13–16, 38–41, Thr128, Arg142, Gln223, Thr238, and Arg302 contribute to the IMP site; these read DEGK and NAGH. His41 functions as the Proton donor in the catalytic mechanism. 298-304 is a binding site for substrate; sequence TTTGRPR. GTP contacts are provided by residues Arg304, 330–332, and 412–414; these read SID and SVG.

It belongs to the adenylosuccinate synthetase family. In terms of assembly, homodimer. Mg(2+) is required as a cofactor.

It localises to the cytoplasm. The enzyme catalyses IMP + L-aspartate + GTP = N(6)-(1,2-dicarboxyethyl)-AMP + GDP + phosphate + 2 H(+). Its pathway is purine metabolism; AMP biosynthesis via de novo pathway; AMP from IMP: step 1/2. In terms of biological role, plays an important role in the de novo pathway of purine nucleotide biosynthesis. Catalyzes the first committed step in the biosynthesis of AMP from IMP. This Bacillus cereus (strain ATCC 14579 / DSM 31 / CCUG 7414 / JCM 2152 / NBRC 15305 / NCIMB 9373 / NCTC 2599 / NRRL B-3711) protein is Adenylosuccinate synthetase.